The following is a 602-amino-acid chain: Potassium voltage-gated channel subfamily A member 5 (602 aa).

The tract at residues 1–107 is disordered; the sequence is MEISLVPMEN…EDQAPQDSGS (107 aa). The interval 1-202 is tetramerization domain; that stretch reads MEISLVPMEN…FYQLGDEAME (202 aa). At 1–238 the chain is on the cytoplasmic side; the sequence is MEISLVPMEN…LIFEYPESSG (238 aa). A compositionally biased stretch (pro residues) spans 66 to 78; it reads PLPPMPQELPQPR. Serine 81 carries the post-translational modification Phosphoserine; by CK2 and PKA. Lysine 212 participates in a covalent cross-link: Glycyl lysine isopeptide (Lys-Gly) (interchain with G-Cter in SUMO). Residues 239 to 260 traverse the membrane as a helical segment; the sequence is SARAIAIVSVLVILISIITFCL. The Extracellular portion of the chain corresponds to 261 to 314; sequence ETLPEFRDERELLRHPPVPPQPPAPAPGANGSGSGVLSSGPTVAPLLPRTLADP. The tract at residues 274 to 297 is disordered; it reads RHPPVPPQPPAPAPGANGSGSGVL. Over residues 276-286 the composition is skewed to pro residues; sequence PPVPPQPPAPA. Residue asparagine 290 is glycosylated (N-linked (GlcNAc...) asparagine). Residues 315–336 form a helical membrane-spanning segment; it reads FFIVETTCVIWFTFELLVRFFA. Cysteine 337 is lipidated: S-palmitoyl cysteine. Topologically, residues 337–347 are cytoplasmic; that stretch reads CPSKAEFSRNI. The helical transmembrane segment at 348–368 threads the bilayer; sequence MNIIDIVAIFPYFITLGTELA. Over 369–384 the chain is Extracellular; sequence EQQPGGGGQNGQQAMS. The chain crosses the membrane as a helical; Voltage-sensor span at residues 385–405; that stretch reads LAILRVIRLVRVFRIFKLSRH. Residues 406-420 lie on the Cytoplasmic side of the membrane; the sequence is SKGLQILGKTLQASM. The interval 407 to 420 is S4-S5 linker; sequence KGLQILGKTLQASM. The helical transmembrane segment at 421 to 442 threads the bilayer; that stretch reads RELGLLIFFLFIGVILFSSAVY. Topologically, residues 443–456 are extracellular; the sequence is FAEADNQGSHFSSI. The segment at residues 457–468 is an intramembrane region (helical); it reads PDAFWWAVVTMT. Positions 469–474 match the Selectivity filter motif; sequence TVGYGD. The stretch at 469 to 476 is an intramembrane region; sequence TVGYGDMR. The Extracellular portion of the chain corresponds to 477 to 483; that stretch reads PITVGGK. The chain crosses the membrane as a helical span at residues 484–512; it reads IVGSLCAIAGVLTIALPVPVIVSNFNYFY. The Cytoplasmic portion of the chain corresponds to 513–602; the sequence is HRETDHEEQA…CLDTSRETDL (90 aa). Residue lysine 525 forms a Glycyl lysine isopeptide (Lys-Gly) (interchain with G-Cter in SUMO) linkage. 3 positions are modified to phosphoserine; by PKA: serine 535, serine 546, and serine 569. Residues 600-602 carry the PDZ-binding motif; that stretch reads TDL.

Belongs to the potassium channel family. A (Shaker) (TC 1.A.1.2) subfamily. Kv1.5/KCNA5 sub-subfamily. In terms of assembly, homotetramer and heterotetramer of potassium channel proteins. Interacts with DLG1, which enhances channel currents. Forms a ternary complex with DLG1 and CAV3. Interacts with KCNAB1. Interacts with UBE2I. Interacts with XIRP2; the interaction is required for normal action potential configuration in the heart. In terms of processing, glycosylated. Post-translationally, sumoylated on Lys-212, and Lys-525, preferentially with SUMO3. Sumoylation regulates the voltage sensitivity of the channel. As to expression, expressed in the heart (at protein level). Expressed in the brain and weakly expressed in the thymus, skeletal muscle and spleen.

The protein resides in the cell membrane. It carries out the reaction K(+)(in) = K(+)(out). In terms of biological role, voltage-gated potassium channel that mediates transmembrane potassium transport in excitable membranes. Forms tetrameric potassium-selective channels through which potassium ions pass in accordance with their electrochemical gradient. The channel alternates between opened and closed conformations in response to the voltage difference across the membrane. Can form functional homotetrameric channels and heterotetrameric channels that contain variable proportions of KCNA1, KCNA2, KCNA4, KCNA5, and possibly other family members as well; channel properties depend on the type of alpha subunits that are part of the channel. Channel properties are modulated by cytoplasmic beta subunits that regulate the subcellular location of the alpha subunits and promote rapid inactivation. Homotetrameric channels display rapid activation and slow inactivation. Required for normal electrical conduction including formation of the infranodal ventricular conduction system and normal action potential configuration, as a result of its interaction with XIRP2. May play a role in regulating the secretion of insulin in normal pancreatic islets. Voltage-gated potassium channel that mediates transmembrane potassium transport in excitable membranes. Forms tetrameric potassium-selective channels through which potassium ions pass in accordance with their electrochemical gradient. The channel alternates between opened and closed conformations in response to the voltage difference across the membrane. Functionally, inactive. Inhibits expression of isoform 1 and isoform 2. This Mus musculus (Mouse) protein is Potassium voltage-gated channel subfamily A member 5 (Kcna5).